We begin with the raw amino-acid sequence, 210 residues long: Putative truncated L-serine dehydratase SDL1 (210 aa).

The protein belongs to the serine/threonine dehydratase family. Pyridoxal 5'-phosphate is required as a cofactor.

The protein localises to the cytoplasm. The enzyme catalyses L-serine = pyruvate + NH4(+). It functions in the pathway carbohydrate biosynthesis; gluconeogenesis. This Saccharomyces cerevisiae (strain ATCC 204508 / S288c) (Baker's yeast) protein is Putative truncated L-serine dehydratase SDL1 (SDL1).